A 182-amino-acid polypeptide reads, in one-letter code: Putative manganese efflux pump MntP (182 aa).

A run of 6 helical transmembrane segments spans residues 6-26, 37-57, 71-91, 101-121, 131-151, and 162-182; these read LIPLIIMAFALGMDAFSVSLG, ILYIGVTIGIFHIIMPFIGMV, HFAGAILLIGLGFYIVYSSIL, IGISLFVFAFGVSIDSFSVGL, VITILLFGFISMLLAWTGLFI, and YGEIVGGIILVGFGLYLLFPI.

The protein belongs to the MntP (TC 9.B.29) family.

Its subcellular location is the cell membrane. Its function is as follows. Probably functions as a manganese efflux pump. The protein is Putative manganese efflux pump MntP of Bacillus cereus (strain Q1).